The sequence spans 258 residues: HTH-type transcriptional repressor GlcR (258 aa).

One can recognise an HTH deoR-type domain in the interval 3–58; the sequence is QEERLVAILDFLKQHNRITTEQICTLLQVSRDTARRDLVKLEEQNAIIRTRGGAIL. Positions 20–39 form a DNA-binding region, H-T-H motif; it reads ITTEQICTLLQVSRDTARRD.

Its function is as follows. Plays a role in carbon catabolite repression (CCR). Specifically required for transcriptional repression of the levanase operon by glucose but not by other sugars. This chain is HTH-type transcriptional repressor GlcR (glcR), found in Bacillus subtilis (strain 168).